A 142-amino-acid polypeptide reads, in one-letter code: Large ribosomal subunit protein uL13 (142 aa).

Belongs to the universal ribosomal protein uL13 family. Part of the 50S ribosomal subunit.

This protein is one of the early assembly proteins of the 50S ribosomal subunit, although it is not seen to bind rRNA by itself. It is important during the early stages of 50S assembly. The polypeptide is Large ribosomal subunit protein uL13 (Pseudomonas putida (strain W619)).